The following is a 380-amino-acid chain: Endo-polygalacturonase (380 aa).

The N-terminal stretch at M1–A17 is a signal peptide. Residues V18–R42 constitute a propeptide that is removed on maturation. C46 and C64 are oxidised to a cystine. PbH1 repeat units follow at residues A178–S207, S208–S229, G230–S250, V259–T280, V288–Q310, and T322–A343. D222 (proton donor) is an active-site residue. A disulfide bridge links C224 with C240. H244 is an active-site residue. A disulfide bond links C350 and C353. An N-linked (GlcNAc...) asparagine glycan is attached at N361. C371 and C380 form a disulfide bridge.

It belongs to the glycosyl hydrolase 28 family.

The protein localises to the secreted. The enzyme catalyses (1,4-alpha-D-galacturonosyl)n+m + H2O = (1,4-alpha-D-galacturonosyl)n + (1,4-alpha-D-galacturonosyl)m.. The sequence is that of Endo-polygalacturonase (PG1) from Sclerotinia sclerotiorum (White mold).